The following is a 342-amino-acid chain: Ketol-acid reductoisomerase (NADP(+)) (342 aa).

A KARI N-terminal Rossmann domain is found at 2-182; it reads AELFYDDDAD…GGLRAAGIKT (181 aa). NADP(+)-binding positions include 25 to 28, Arg-48, Ser-51, Ser-53, and 83 to 86; these read YGSQ and DQHQ. His-108 is a catalytic residue. Position 134 (Gly-134) interacts with NADP(+). A KARI C-terminal knotted domain is found at 183–328; that stretch reads TFTEETETDL…RELRKLFAWV (146 aa). Mg(2+) is bound by residues Asp-191, Glu-195, Glu-227, and Glu-231. Ser-252 is a substrate binding site.

The protein belongs to the ketol-acid reductoisomerase family. Requires Mg(2+) as cofactor.

It catalyses the reaction (2R)-2,3-dihydroxy-3-methylbutanoate + NADP(+) = (2S)-2-acetolactate + NADPH + H(+). It carries out the reaction (2R,3R)-2,3-dihydroxy-3-methylpentanoate + NADP(+) = (S)-2-ethyl-2-hydroxy-3-oxobutanoate + NADPH + H(+). The protein operates within amino-acid biosynthesis; L-isoleucine biosynthesis; L-isoleucine from 2-oxobutanoate: step 2/4. It functions in the pathway amino-acid biosynthesis; L-valine biosynthesis; L-valine from pyruvate: step 2/4. Involved in the biosynthesis of branched-chain amino acids (BCAA). Catalyzes an alkyl-migration followed by a ketol-acid reduction of (S)-2-acetolactate (S2AL) to yield (R)-2,3-dihydroxy-isovalerate. In the isomerase reaction, S2AL is rearranged via a Mg-dependent methyl migration to produce 3-hydroxy-3-methyl-2-ketobutyrate (HMKB). In the reductase reaction, this 2-ketoacid undergoes a metal-dependent reduction by NADPH to yield (R)-2,3-dihydroxy-isovalerate. This is Ketol-acid reductoisomerase (NADP(+)) from Beutenbergia cavernae (strain ATCC BAA-8 / DSM 12333 / CCUG 43141 / JCM 11478 / NBRC 16432 / NCIMB 13614 / HKI 0122).